The sequence spans 105 residues: Insulin (105 aa).

The N-terminal stretch at 1–24 (MALWTRLRPLLALLALWPPPPARA) is a signal peptide. Cystine bridges form between Cys31-Cys91, Cys43-Cys104, and Cys90-Cys95. Positions 57–82 (EVEGPQVGALELAGGPGAGGLEGPPQ) are cleaved as a propeptide — c peptide.

It belongs to the insulin family. As to quaternary structure, heterodimer of a B chain and an A chain linked by two disulfide bonds.

Its subcellular location is the secreted. Insulin decreases blood glucose concentration. It increases cell permeability to monosaccharides, amino acids and fatty acids. It accelerates glycolysis, the pentose phosphate cycle, and glycogen synthesis in liver. The chain is Insulin (INS) from Bos taurus (Bovine).